A 490-amino-acid chain; its full sequence is Aspartyl/glutamyl-tRNA(Asn/Gln) amidotransferase subunit B (490 aa).

It belongs to the GatB/GatE family. GatB subfamily. Heterotrimer of A, B and C subunits.

The catalysed reaction is L-glutamyl-tRNA(Gln) + L-glutamine + ATP + H2O = L-glutaminyl-tRNA(Gln) + L-glutamate + ADP + phosphate + H(+). It carries out the reaction L-aspartyl-tRNA(Asn) + L-glutamine + ATP + H2O = L-asparaginyl-tRNA(Asn) + L-glutamate + ADP + phosphate + 2 H(+). In terms of biological role, allows the formation of correctly charged Asn-tRNA(Asn) or Gln-tRNA(Gln) through the transamidation of misacylated Asp-tRNA(Asn) or Glu-tRNA(Gln) in organisms which lack either or both of asparaginyl-tRNA or glutaminyl-tRNA synthetases. The reaction takes place in the presence of glutamine and ATP through an activated phospho-Asp-tRNA(Asn) or phospho-Glu-tRNA(Gln). This Methylorubrum extorquens (strain CM4 / NCIMB 13688) (Methylobacterium extorquens) protein is Aspartyl/glutamyl-tRNA(Asn/Gln) amidotransferase subunit B.